The following is a 100-amino-acid chain: MQRFTALHYTPFPLLVFLSSYFPLKMHLFTRVFFLIASITLLYRPTQRGIYIDYKRIVDFDGDLISVQNIQDVYTQCLQLSLYSYHAISRLFSEEKSSVH.

This is an uncharacterized protein from Saccharomyces cerevisiae (strain ATCC 204508 / S288c) (Baker's yeast).